A 700-amino-acid chain; its full sequence is Phenoloxidase 8 (700 aa).

The propeptide occupies 1–51; it reads MATLTQKFHGLLQHPLEPLFLPKNDGTLFYDLPERFLTSRYSPIGQNLANR. Asn-64 and Asn-198 each carry an N-linked (GlcNAc...) asparagine glycan. His-223, His-227, and His-252 together coordinate Cu cation. Asn-295 carries an N-linked (GlcNAc...) asparagine glycan. Glu-364 acts as the Proton acceptor in catalysis. 3 residues coordinate Cu cation: His-379, His-383, and His-419. N-linked (GlcNAc...) asparagine glycans are attached at residues Asn-445, Asn-507, and Asn-565. Disulfide bonds link Cys-592/Cys-636 and Cys-594/Cys-643.

The protein belongs to the tyrosinase family. As to quaternary structure, homodimer. It depends on Cu(2+) as a cofactor. In terms of processing, upon activation, a trypsin type protease cleaves prophenol oxidase to yield the active enzyme.

Its subcellular location is the secreted. The enzyme catalyses 2 tyramine + O2 = 2 dopamine. It carries out the reaction 2 dopamine + O2 = 2 dopamine quinone + 2 H2O. This is a copper-containing oxidase that functions in the formation of pigments such as melanins and other polyphenolic compounds. Catalyzes the oxidation of o-diphenols such as dopamine. Also oxidizes monophenols such as tyramine. This Anopheles gambiae (African malaria mosquito) protein is Phenoloxidase 8.